Consider the following 1111-residue polypeptide: Serine/threonine-protein kinase Nek10 (1111 aa).

Over residues 1–16 the composition is skewed to basic and acidic residues; that stretch reads MPDQDTKAKSTEKTAD. Disordered stretches follow at residues 1-24 and 47-72; these read MPDQ…TTTR and AINF…HRAR. The segment covering 47-63 has biased composition (polar residues); sequence AINFDSAQNNMTKSEPT. Positions 481–514 form a coiled coil; that stretch reads YKDLVSQLNLLLEDELKQIAENIESINQKKAPLK. The Protein kinase domain occupies 519 to 791; that stretch reads YAVLDHLGSG…MISDVMMKYL (273 aa). ATP-binding positions include 525-533 and Lys-548; that span reads LGSGAFGCV. Asp-655 (proton acceptor) is an active-site residue.

This sequence belongs to the protein kinase superfamily. NEK Ser/Thr protein kinase family. NIMA subfamily. Interacts with RAF1 and MAP2K1; the interaction is direct with RAF1 and required for ERK1/2-signaling pathway activation in response to UV irradiation. Requires Mg(2+) as cofactor. Expressed in the mammary gland, lung, spleen, and kidney.

The enzyme catalyses L-seryl-[protein] + ATP = O-phospho-L-seryl-[protein] + ADP + H(+). The catalysed reaction is L-threonyl-[protein] + ATP = O-phospho-L-threonyl-[protein] + ADP + H(+). Its function is as follows. Plays a role in the cellular response to UV irradiation. Mediates G2/M cell cycle arrest, MEK autoactivation and ERK1/2-signaling pathway activation in response to UV irradiation. In ciliated cells, it is involved in the regulation of mucociliary transport. In Mus musculus (Mouse), this protein is Serine/threonine-protein kinase Nek10.